Reading from the N-terminus, the 142-residue chain is Mini-ribonuclease 3 (142 aa).

The active site involves D33.

It belongs to the MrnC RNase family. As to quaternary structure, homodimer. Mg(2+) is required as a cofactor.

It localises to the cytoplasm. Its function is as follows. Involved in correct processing of both the 5' and 3' ends of 23S rRNA precursor. Processes 30S rRNA precursor transcript even in absence of ribonuclease 3 (Rnc); Rnc processes 30S rRNA into smaller rRNA precursors. This is Mini-ribonuclease 3 from Thermoanaerobacter sp. (strain X514).